The sequence spans 510 residues: 2,3-bisphosphoglycerate-independent phosphoglycerate mutase (510 aa).

2 residues coordinate Mn(2+): D10 and S60. The Phosphoserine intermediate role is filled by S60. Residues H121, 150 to 151 (RD), R182, R188, 252 to 255 (RPDR), and K325 contribute to the substrate site. The Mn(2+) site is built by D392, H396, D433, H434, and H451.

Belongs to the BPG-independent phosphoglycerate mutase family. Mn(2+) is required as a cofactor.

It localises to the plastid. The protein localises to the chloroplast. The catalysed reaction is (2R)-2-phosphoglycerate = (2R)-3-phosphoglycerate. It functions in the pathway carbohydrate degradation; glycolysis; pyruvate from D-glyceraldehyde 3-phosphate: step 3/5. In terms of biological role, catalyzes the interconversion of 2-phosphoglycerate and 3-phosphoglycerate. In Gracilaria tenuistipitata var. liui (Red alga), this protein is 2,3-bisphosphoglycerate-independent phosphoglycerate mutase.